Reading from the N-terminus, the 106-residue chain is Cytochrome c3 (106 aa).

Heme c is bound by residues histidine 26, histidine 29, cysteine 34, cysteine 37, histidine 38, histidine 39, cysteine 50, cysteine 55, histidine 56, histidine 75, cysteine 82, cysteine 85, histidine 86, cysteine 98, cysteine 101, and histidine 102.

Binds 4 heme c groups per subunit.

Participates in sulfate respiration coupled with phosphorylation by transferring electrons from the enzyme dehydrogenase to ferredoxin. The chain is Cytochrome c3 from Maridesulfovibrio salexigens (Desulfovibrio salexigens).